Here is a 511-residue protein sequence, read N- to C-terminus: Vesicular acetylcholine transporter (511 aa).

The Cytoplasmic portion of the chain corresponds to 1-36 (MAVGQAKAAMGKISSAIGERSKRISGAMNEPRRKRK). The helical transmembrane segment at 37 to 57 (ILLVIVCIAMLLDNMLYMVIV) threads the bilayer. Topologically, residues 58 to 108 (PIIPNYLETIRTYKLVYITTPSNGTNGSLLNSTQRAVLERNPNANEDIQIG) are lumenal, vesicle. Asn80, Asn83, and Asn88 each carry an N-linked (GlcNAc...) asparagine glycan. The helical transmembrane segment at 109–129 (VLFASKAILQLLSNPFTGTFI) threads the bilayer. At 130–135 (DRVGYD) the chain is on the cytoplasmic side. A helical transmembrane segment spans residues 136–156 (IPLLIGLTIMFFSTITFAFGE). Residues 157–165 (SYAILFAAR) lie on the Lumenal, vesicle side of the membrane. A helical membrane pass occupies residues 166 to 186 (SLQGLGSAFADTSGIAMIADK). The Cytoplasmic portion of the chain corresponds to 187–197 (YTEESERTQAL). Residues 198–218 (GIALAFISFGSLVAPPFGGVL) traverse the membrane as a helical segment. The Lumenal, vesicle segment spans residues 219–225 (YQFAGKW). A helical membrane pass occupies residues 226–246 (VPFLVLSFVCLLDGILLLMVV). At 247–267 (TPFASRTRVNTLQGTPIYKLM) the chain is on the cytoplasmic side. The helical transmembrane segment at 268–288 (IDPYIAVVAGALTTCNIPLAF) threads the bilayer. Residues 289-306 (LEPTISNWMKKTMNASEW) lie on the Lumenal, vesicle side of the membrane. Asn302 carries N-linked (GlcNAc...) asparagine glycosylation. A helical transmembrane segment spans residues 307–327 (QMGITWLPAFFPHILGVYITV). Residues 328–337 (KLAAKYPNYQ) are Cytoplasmic-facing. The helical transmembrane segment at 338-358 (WLYGAVGLVIIGASSCTIPAC) threads the bilayer. Residues 359-363 (RNFEE) lie on the Lumenal, vesicle side of the membrane. A helical membrane pass occupies residues 364–384 (LIIPLCALCFGIALVDTALLP). The Cytoplasmic segment spans residues 385–400 (TLAFLVDIRYVSVYGS). The helical transmembrane segment at 401–421 (VYAIADISYSVAYALGPIMAG) threads the bilayer. Over 422 to 428 (QIVHDLG) the chain is Lumenal, vesicle. The chain crosses the membrane as a helical span at residues 429–449 (FVQLNLGMGLVNILYAPGLLF). The Cytoplasmic segment spans residues 450-511 (LRNVCQMKPS…VLSDQEGYSE (62 aa)). The disordered stretch occupies residues 485-511 (EAKEPHGTSSGNHSVHAVLSDQEGYSE).

This sequence belongs to the major facilitator superfamily. Vesicular transporter family. As to expression, high expression in the electric lobe of the brain.

It localises to the membrane. Functionally, involved in acetylcholine transport into synaptic vesicles. In Torpedo marmorata (Marbled electric ray), this protein is Vesicular acetylcholine transporter.